The following is a 456-amino-acid chain: GTPase Der (456 aa).

2 EngA-type G domains span residues 3–167 (FTIA…PETE) and 185–360 (IRVA…AVWN). Residues 9-16 (GRPNVGKS), 56-60 (DTAGL), 119-122 (NKSE), 191-198 (GRPNAGKS), 238-242 (DTAGL), and 303-306 (NKWD) each bind GTP. Positions 361-445 (RRVPTAALNR…PVRITLREKA (85 aa)) constitute a KH-like domain.

This sequence belongs to the TRAFAC class TrmE-Era-EngA-EngB-Septin-like GTPase superfamily. EngA (Der) GTPase family. Associates with the 50S ribosomal subunit.

GTPase that plays an essential role in the late steps of ribosome biogenesis. In Bradyrhizobium sp. (strain BTAi1 / ATCC BAA-1182), this protein is GTPase Der.